We begin with the raw amino-acid sequence, 113 residues long: MIPRLLPFFASLLFAALLFPGLSNASSINHLVTEPPSFPKDEFPARGVNGSQLLHHRVKRLPPRTPPYHEPEPNYQIVNCKKSEGQCQEYCNFMETQVGYCSKKKEPCCLHPF.

The first 26 residues, 1–26, serve as a signal peptide directing secretion; that stretch reads MIPRLLPFFASLLFAALLFPGLSNAS. Cystine bridges form between Cys80-Cys108, Cys87-Cys101, and Cys91-Cys109.

Belongs to the beta-defensin family.

The protein resides in the secreted. In terms of biological role, has antimicrobial activity against E.coli. Plays a role in the defense response in the male reproductive tract, contributing to sperm maturation, storage and protection. The polypeptide is Sperm-associated antigen 11B (Mus musculus (Mouse)).